Here is a 75-residue protein sequence, read N- to C-terminus: Large ribosomal subunit protein bL31 (75 aa).

The protein belongs to the bacterial ribosomal protein bL31 family. Type A subfamily. As to quaternary structure, part of the 50S ribosomal subunit.

Binds the 23S rRNA. This is Large ribosomal subunit protein bL31 from Pelodictyon phaeoclathratiforme (strain DSM 5477 / BU-1).